Consider the following 225-residue polypeptide: Histone H1.11L (225 aa).

Composition is skewed to low complexity over residues 1–23 (MSET…PAKA) and 31–43 (AAGG…PAGP). Disordered stretches follow at residues 1-46 (MSET…PSVT) and 94-225 (SKGT…AKKK). At Ser-2 the chain carries N-acetylserine. An H15 domain is found at 41 to 114 (AGPSVTELIT…GASGSFRLSK (74 aa)). Basic residues-rich tracts occupy residues 123-138 (APKK…KPAA), 146-163 (KKPK…KAKK), 171-189 (KSAK…KKAV), and 198-225 (KAVK…AKKK).

It belongs to the histone H1/H5 family.

The protein localises to the nucleus. It is found in the chromosome. Histones H1 are necessary for the condensation of nucleosome chains into higher-order structures. The polypeptide is Histone H1.11L (Gallus gallus (Chicken)).